The sequence spans 362 residues: MYKLLGSLKSYLKWQDIQTDNAVFRLHNSFTTVLLLTCSLIITATQYVGQPISCIVNGVPPHVVNTFCWIHSTFTMPDAFRRQVGREVAHPGVANDFGDEDAKKYYTYYQWVCFVLFFQAMACYTPKFLWNKFEGGLMRMIVMGLNITICTREEKEAKRDALLDYLIKHVKRHKLYAIRYWACEFLCCINIIVQMYLMNRFFDGEFLSYGTNIMKLSDVPQEQRVDPMVYVFPRVTKCTFHKYGPSGSLQKHDSLCILPLNIVNEKTYVFIWFWFWILLVLLIGLIVFRGCIIFMPKFRPRLLNASNRMIPMEICRSLSRKLDIGDWWLIYMLGRNLDPVIYKDVMSEFAKQVEPSKHDRAK.

Topologically, residues 1–28 (MYKLLGSLKSYLKWQDIQTDNAVFRLHN) are cytoplasmic. Residues 29 to 49 (SFTTVLLLTCSLIITATQYVG) traverse the membrane as a helical segment. Residues 50–110 (QPISCIVNGV…DAKKYYTYYQ (61 aa)) are Extracellular-facing. Residues 111–131 (WVCFVLFFQAMACYTPKFLWN) form a helical membrane-spanning segment. The Cytoplasmic segment spans residues 132–177 (KFEGGLMRMIVMGLNITICTREEKEAKRDALLDYLIKHVKRHKLYA). Residues 178–198 (IRYWACEFLCCINIIVQMYLM) traverse the membrane as a helical segment. The Extracellular segment spans residues 199 to 267 (NRFFDGEFLS…LPLNIVNEKT (69 aa)). The chain crosses the membrane as a helical span at residues 268-288 (YVFIWFWFWILLVLLIGLIVF). The Cytoplasmic segment spans residues 289–362 (RGCIIFMPKF…VEPSKHDRAK (74 aa)).

The protein belongs to the pannexin family. Heterooligomer of Inx2 and ogre. In ovary, expressed in follicle cells. Expressed around the periphery of the embryo during cellular blastoderm formation. Repeating epidermal pattern emerges from stage 11, high levels of expression detected along the borders of each segment from stage 13. At stage 13, expressed in the dorsal branch of the tracheal system. During stage 15, detected in a few cells at each of the branch points of the dorsal trunk and at low levels in cardioblasts. In embryos, also expressed in the salivary gland and the hindgut (at protein level). At stage 17, expressed in the dorsal side of the CNS. Expressed in the imaginal wing disk. Expressed in larval CNS and in tissues outside of the CNS. In pupae, expressed in the CNS and in primary, secondary and tertiary pigment cells of the retina.

The protein resides in the cell membrane. The protein localises to the cell junction. It is found in the gap junction. Its subcellular location is the basolateral cell membrane. Functionally, structural component of the gap junctions. Essential for generation and/or maintenance of postembryonic neuroblasts and normal development of optic lobe. This chain is Innexin inx1 (ogre), found in Drosophila melanogaster (Fruit fly).